The primary structure comprises 129 residues: Protein BEX2 (129 aa).

Positions 1–38 are disordered; that stretch reads MESKVEQGVKNLNMENDHQEKEEKEEKPQDANKREPVV. Positions 15–36 are enriched in basic and acidic residues; that stretch reads ENDHQEKEEKEEKPQDANKREP. An Omega-N-methylarginine modification is found at arginine 51. The segment at 108–129 is disordered; the sequence is SLRAVSTDPPHHDHHDEFCLMP. Positions 116-129 are enriched in basic and acidic residues; sequence PPHHDHHDEFCLMP. The segment at 118–122 is his cluster; the sequence is HHDHH. Residue cysteine 126 participates in Zn(2+) binding.

Belongs to the BEX family. Interacts with LMO2, possibly leading to regulate the transcriptional activity of a DNA-binding complex containing LMO2. Interacts with OMP.

The protein resides in the nucleus. The protein localises to the cytoplasm. Functionally, regulator of mitochondrial apoptosis and G1 cell cycle. Regulates the level of PP2A regulatory subunit B and PP2A phosphatase activity. In absence of reductive stress, acts as a pseudosubstrate for the CRL2(FEM1B) complex: associates with FEM1B via zinc, thereby preventing association between FEM1B and its substrates. The chain is Protein BEX2 (Bex2) from Rattus norvegicus (Rat).